The primary structure comprises 271 residues: Ferric enterobactin transport ATP-binding protein FepC (271 aa).

Positions 8–244 (LRGEQLTLGY…ELIERIYGLR (237 aa)) constitute an ABC transporter domain. 40-47 (GPNGCGKS) is an ATP binding site.

Belongs to the ABC transporter superfamily. In terms of assembly, the complex is composed of two ATP-binding proteins (FepC), two transmembrane proteins (FepD and FepG) and a solute-binding protein (FepB).

The protein resides in the cell inner membrane. It catalyses the reaction Fe(III)-enterobactin(out) + ATP + H2O = Fe(III)-enterobactin(in) + ADP + phosphate + H(+). Functionally, part of the ABC transporter complex FepBDGC involved in ferric enterobactin uptake. Responsible for energy coupling to the transport system. The protein is Ferric enterobactin transport ATP-binding protein FepC (fepC) of Escherichia coli (strain K12).